The chain runs to 379 residues: UDP-4-amino-4-deoxy-L-arabinose--oxoglutarate aminotransferase (379 aa).

Position 182 is an N6-(pyridoxal phosphate)lysine (lysine 182).

The protein belongs to the DegT/DnrJ/EryC1 family. ArnB subfamily. Homodimer. Pyridoxal 5'-phosphate serves as cofactor.

The catalysed reaction is UDP-4-amino-4-deoxy-beta-L-arabinose + 2-oxoglutarate = UDP-beta-L-threo-pentopyranos-4-ulose + L-glutamate. It participates in nucleotide-sugar biosynthesis; UDP-4-deoxy-4-formamido-beta-L-arabinose biosynthesis; UDP-4-deoxy-4-formamido-beta-L-arabinose from UDP-alpha-D-glucuronate: step 2/3. It functions in the pathway bacterial outer membrane biogenesis; lipopolysaccharide biosynthesis. Its function is as follows. Catalyzes the conversion of UDP-4-keto-arabinose (UDP-Ara4O) to UDP-4-amino-4-deoxy-L-arabinose (UDP-L-Ara4N). The modified arabinose is attached to lipid A and is required for resistance to polymyxin and cationic antimicrobial peptides. This Salmonella choleraesuis (strain SC-B67) protein is UDP-4-amino-4-deoxy-L-arabinose--oxoglutarate aminotransferase.